We begin with the raw amino-acid sequence, 65 residues long: MPKMKTKKSASKRFTARPGGTIKRGQAFKRHILTKKTTKNKRHLRGTEGVHETNLKSVRAMMPYA.

Over residues 1–15 (MPKMKTKKSASKRFT) the composition is skewed to basic residues. 2 disordered regions span residues 1–26 (MPKM…KRGQ) and 38–65 (TKNK…MPYA). The span at 45 to 54 (RGTEGVHETN) shows a compositional bias: basic and acidic residues.

The protein belongs to the bacterial ribosomal protein bL35 family.

The chain is Large ribosomal subunit protein bL35 from Ralstonia pickettii (strain 12J).